A 237-amino-acid polypeptide reads, in one-letter code: RNA chaperone ProQ (237 aa).

Residues 106-188 are disordered; sequence AKARVQAQRA…QPRPVPVTDI (83 aa). Over residues 146 to 158 the composition is skewed to basic and acidic residues; the sequence is PRREAGAAPENRK.

The protein belongs to the ProQ family.

The protein resides in the cytoplasm. RNA chaperone with significant RNA binding, RNA strand exchange and RNA duplexing activities. May regulate ProP activity through an RNA-based, post-transcriptional mechanism. The protein is RNA chaperone ProQ of Yersinia pseudotuberculosis serotype O:1b (strain IP 31758).